Reading from the N-terminus, the 496-residue chain is Fascin (496 aa).

It belongs to the fascin family.

The protein localises to the cytoplasm. Its subcellular location is the cytoskeleton. In terms of biological role, acts as an actin bundling protein. This Strongylocentrotus purpuratus (Purple sea urchin) protein is Fascin.